The following is a 94-amino-acid chain: CRISPR-associated endoribonuclease Cas2 (94 aa).

Asp11 is a Mg(2+) binding site.

This sequence belongs to the CRISPR-associated endoribonuclease Cas2 protein family. As to quaternary structure, homodimer, forms a heterotetramer with a Cas1 homodimer. Mg(2+) serves as cofactor.

In terms of biological role, CRISPR (clustered regularly interspaced short palindromic repeat), is an adaptive immune system that provides protection against mobile genetic elements (viruses, transposable elements and conjugative plasmids). CRISPR clusters contain sequences complementary to antecedent mobile elements and target invading nucleic acids. CRISPR clusters are transcribed and processed into CRISPR RNA (crRNA). Functions as a ssRNA-specific endoribonuclease. Involved in the integration of spacer DNA into the CRISPR cassette. The sequence is that of CRISPR-associated endoribonuclease Cas2 from Allochromatium vinosum (strain ATCC 17899 / DSM 180 / NBRC 103801 / NCIMB 10441 / D) (Chromatium vinosum).